The chain runs to 456 residues: Exodeoxyribonuclease 7 large subunit (456 aa).

The protein belongs to the XseA family. As to quaternary structure, heterooligomer composed of large and small subunits.

It localises to the cytoplasm. The enzyme catalyses Exonucleolytic cleavage in either 5'- to 3'- or 3'- to 5'-direction to yield nucleoside 5'-phosphates.. Its function is as follows. Bidirectionally degrades single-stranded DNA into large acid-insoluble oligonucleotides, which are then degraded further into small acid-soluble oligonucleotides. The chain is Exodeoxyribonuclease 7 large subunit from Escherichia coli (strain SE11).